We begin with the raw amino-acid sequence, 510 residues long: ATP synthase subunit alpha (510 aa).

Residue 169 to 176 (GDRQTGKT) coordinates ATP.

It belongs to the ATPase alpha/beta chains family. In terms of assembly, F-type ATPases have 2 components, CF(1) - the catalytic core - and CF(0) - the membrane proton channel. CF(1) has five subunits: alpha(3), beta(3), gamma(1), delta(1), epsilon(1). CF(0) has three main subunits: a(1), b(2) and c(9-12). The alpha and beta chains form an alternating ring which encloses part of the gamma chain. CF(1) is attached to CF(0) by a central stalk formed by the gamma and epsilon chains, while a peripheral stalk is formed by the delta and b chains.

The protein localises to the cell inner membrane. It catalyses the reaction ATP + H2O + 4 H(+)(in) = ADP + phosphate + 5 H(+)(out). In terms of biological role, produces ATP from ADP in the presence of a proton gradient across the membrane. The alpha chain is a regulatory subunit. This chain is ATP synthase subunit alpha, found in Nitrobacter hamburgensis (strain DSM 10229 / NCIMB 13809 / X14).